Consider the following 199-residue polypeptide: Recombination protein RecR (199 aa).

The C4-type zinc-finger motif lies at 58 to 73 (CRRCFNLTEGEECDIC). The Toprim domain occupies 81–176 (SVICVVEDPY…RVTALASGLP (96 aa)).

The protein belongs to the RecR family.

May play a role in DNA repair. It seems to be involved in an RecBC-independent recombinational process of DNA repair. It may act with RecF and RecO. This Rubrobacter xylanophilus (strain DSM 9941 / JCM 11954 / NBRC 16129 / PRD-1) protein is Recombination protein RecR.